The primary structure comprises 451 residues: Tubulin alpha-3 chain (451 aa).

Gln11 contacts GTP. An N6-acetyllysine modification is found at Lys40. GTP-binding residues include Glu71, Gly144, Thr145, Thr179, Asn206, and Asn228. Residue Glu71 participates in Mg(2+) binding. Glu254 is an active-site residue.

The protein belongs to the tubulin family. As to quaternary structure, dimer of alpha and beta chains. A typical microtubule is a hollow water-filled tube with an outer diameter of 25 nm and an inner diameter of 15 nM. Alpha-beta heterodimers associate head-to-tail to form protofilaments running lengthwise along the microtubule wall with the beta-tubulin subunit facing the microtubule plus end conferring a structural polarity. Microtubules usually have 13 protofilaments but different protofilament numbers can be found in some organisms and specialized cells. Mg(2+) serves as cofactor. In terms of processing, undergoes a tyrosination/detyrosination cycle, the cyclic removal and re-addition of a C-terminal tyrosine residue by the enzymes tubulin tyrosine carboxypeptidase (TTCP) and tubulin tyrosine ligase (TTL), respectively. Acetylation of alpha chains at Lys-40 stabilizes microtubules and affects affinity and processivity of microtubule motors. This modification has a role in multiple cellular functions, ranging from cell motility, cell cycle progression or cell differentiation to intracellular trafficking and signaling.

It is found in the cytoplasm. Its subcellular location is the cytoskeleton. The catalysed reaction is GTP + H2O = GDP + phosphate + H(+). In terms of biological role, tubulin is the major constituent of microtubules, a cylinder consisting of laterally associated linear protofilaments composed of alpha- and beta-tubulin heterodimers. Microtubules grow by the addition of GTP-tubulin dimers to the microtubule end, where a stabilizing cap forms. Below the cap, tubulin dimers are in GDP-bound state, owing to GTPase activity of alpha-tubulin. This chain is Tubulin alpha-3 chain (TUBA3), found in Hordeum vulgare (Barley).